Consider the following 585-residue polypeptide: Glutamate decarboxylase 2 (585 aa).

Residues 1–14 (MASPGSGFWSFGSE) are compositionally biased toward low complexity. The segment at 1-24 (MASPGSGFWSFGSEDGSGDSENPG) is disordered. 4 positions are modified to phosphoserine: serine 3, serine 6, serine 10, and serine 13. S-palmitoyl cysteine attachment occurs at residues cysteine 30 and cysteine 45. 181-183 (QLS) is a substrate binding site. Lysine 396 is subject to N6-(pyridoxal phosphate)lysine. Arginine 558 is a substrate binding site.

The protein belongs to the group II decarboxylase family. As to quaternary structure, homodimer. Requires pyridoxal 5'-phosphate as cofactor. Phosphorylated; which does not affect kinetic parameters or subcellular location. In terms of processing, palmitoylated; which is required for presynaptic clustering.

Its subcellular location is the cytoplasm. It is found in the cytosol. It localises to the cytoplasmic vesicle. The protein localises to the presynaptic cell membrane. The protein resides in the golgi apparatus membrane. The catalysed reaction is L-glutamate + H(+) = 4-aminobutanoate + CO2. Functionally, catalyzes the production of GABA. The chain is Glutamate decarboxylase 2 from Homo sapiens (Human).